A 281-amino-acid polypeptide reads, in one-letter code: CMT1A duplicated region transcript 15 protein-like protein (281 aa).

Disordered regions lie at residues 107–131 and 150–187; these read KPAW…DQPS and AENV…HGGG. Positions 108–120 are enriched in basic and acidic residues; the sequence is PAWEEPPPERALE. Over residues 165 to 178 the composition is skewed to low complexity; sequence STAPASRSHAAPSP. A helical transmembrane segment spans residues 207 to 227; that stretch reads AGTTALLLQGLFIVLILVGYI.

Its subcellular location is the membrane. This is CMT1A duplicated region transcript 15 protein-like protein (CDRT15L2) from Homo sapiens (Human).